The sequence spans 1003 residues: Phosphoenolpyruvate carboxylase (1003 aa).

Residues 1 to 24 (MIMTVSDPGGSSMSSSSAITPESE) are disordered. Active-site residues include His-190 and Lys-646.

Belongs to the PEPCase type 1 family. Requires Mg(2+) as cofactor.

It carries out the reaction oxaloacetate + phosphate = phosphoenolpyruvate + hydrogencarbonate. In terms of biological role, forms oxaloacetate, a four-carbon dicarboxylic acid source for the tricarboxylic acid cycle. The protein is Phosphoenolpyruvate carboxylase of Synechococcus sp. (strain WH7803).